A 135-amino-acid chain; its full sequence is Cytochrome b-c1 complex subunit 6, mitochondrial (135 aa).

A disordered region spans residues 1 to 70 (MSFFRDLLES…ETADPLDTLR (70 aa)). The span at 19–64 (EPVEDVEVEQPEDAPEEEVSEETVEEEEDDDEDDDEDDEEEEETAD) shows a compositional bias: acidic residues.

The protein belongs to the UQCRH/QCR6 family. In terms of assembly, component of the ubiquinol-cytochrome c oxidoreductase (cytochrome b-c1 complex, complex III, CIII), a multisubunit enzyme composed of 10 subunits. The complex is composed of 3 respiratory subunits cytochrome b (COB), cytochrome c1 (CYT1) and Rieske protein (RIP1), 2 core protein subunits COR1 and QCR2, and 5 low-molecular weight protein subunits QCR6, QCR7, QCR8, QCR9 and QCR10. The complex exists as an obligatory dimer and forms supercomplexes (SCs) in the inner mitochondrial membrane with a monomer or a dimer of cytochrome c oxidase (complex IV, CIV), resulting in 2 different assemblies (supercomplexes III(2)IV and III(2)IV(2)).

It localises to the mitochondrion inner membrane. Component of the ubiquinol-cytochrome c oxidoreductase, a multisubunit transmembrane complex that is part of the mitochondrial electron transport chain which drives oxidative phosphorylation. The complex plays an important role in the uptake of multiple carbon sources present in different host niches. The protein is Cytochrome b-c1 complex subunit 6, mitochondrial of Candida albicans (strain SC5314 / ATCC MYA-2876) (Yeast).